Reading from the N-terminus, the 66-residue chain is Large ribosomal subunit protein bL35 (66 aa).

A compositionally biased stretch (basic residues) spans methionine 1–arginine 16. The tract at residues methionine 1–leucine 22 is disordered.

Belongs to the bacterial ribosomal protein bL35 family.

The protein is Large ribosomal subunit protein bL35 of Streptococcus suis (strain 05ZYH33).